Here is a 66-residue protein sequence, read N- to C-terminus: MSDEKYNAKLDQAGGKLKEGFGKISGDKSLETEGKVDKVTGKVKEVIADAKDTVKGLAKGLDNKDK.

The protein belongs to the UPF0337 (CsbD) family.

This Streptococcus pyogenes serotype M3 (strain ATCC BAA-595 / MGAS315) protein is UPF0337 protein SpyM3_0896.